Consider the following 898-residue polypeptide: Serine/threonine-protein kinase PKH3 (898 aa).

One can recognise a Protein kinase domain in the interval 11–293 (FIFKEELGHG…LEQIKRHPYF (283 aa)). ATP is bound by residues 17 to 25 (LGHGSYSTV) and K41. The Proton acceptor role is filled by D138. Disordered regions lie at residues 435 to 484 (PPKV…PSTE) and 675 to 850 (DSKA…EKYS). Over residues 459–468 (PLQTSSIPQK) the composition is skewed to polar residues. The span at 469–483 (LSTSSASSALSAPST) shows a compositional bias: low complexity. S696 carries the post-translational modification Phosphoserine. The segment covering 697–721 (IGNNVTTLSYTAKNGSQNNAPQNDN) has biased composition (polar residues). Residues 723 to 738 (GEEKPFRIPSSTKDRP) show a composition bias toward basic and acidic residues. 3 stretches are compositionally biased toward polar residues: residues 740–758 (ANST…NNAG), 771–782 (SAPSTNTYTNGS), and 789–803 (RPST…NILT). S753 bears the Phosphoserine mark. Residues 804–817 (SKKQGSSVFSPSSS) show a composition bias toward low complexity. Over residues 818 to 831 (TTKPQIKTTGYRQP) the composition is skewed to polar residues. S871 is modified (phosphoserine).

Belongs to the protein kinase superfamily. Ser/Thr protein kinase family.

The enzyme catalyses L-seryl-[protein] + ATP = O-phospho-L-seryl-[protein] + ADP + H(+). It carries out the reaction L-threonyl-[protein] + ATP = O-phospho-L-threonyl-[protein] + ADP + H(+). Serine/threonine-protein kinase which may phosphorylate the same targets substrates as PKH1 and PKH2, 2 upstream activators of PKC1. The polypeptide is Serine/threonine-protein kinase PKH3 (PKH3) (Saccharomyces cerevisiae (strain ATCC 204508 / S288c) (Baker's yeast)).